Here is a 265-residue protein sequence, read N- to C-terminus: Hydroxyethylthiazole kinase 1 (265 aa).

Position 39 (Met39) interacts with substrate. The ATP site is built by Lys115 and Thr168. Residue Gly195 participates in substrate binding.

It belongs to the Thz kinase family. Mg(2+) serves as cofactor.

It carries out the reaction 5-(2-hydroxyethyl)-4-methylthiazole + ATP = 4-methyl-5-(2-phosphooxyethyl)-thiazole + ADP + H(+). It participates in cofactor biosynthesis; thiamine diphosphate biosynthesis; 4-methyl-5-(2-phosphoethyl)-thiazole from 5-(2-hydroxyethyl)-4-methylthiazole: step 1/1. In terms of biological role, catalyzes the phosphorylation of the hydroxyl group of 4-methyl-5-beta-hydroxyethylthiazole (THZ). In Clostridium botulinum (strain Loch Maree / Type A3), this protein is Hydroxyethylthiazole kinase 1.